A 497-amino-acid polypeptide reads, in one-letter code: tRNA (adenine(58)-N(1))-methyltransferase non-catalytic subunit TRM6 (497 aa).

The tract at residues 81–103 (LEEPASETKEAGTDNRNIVDDGK) is disordered. The segment at 95–105 (NRNIVDDGKSQ) is substrate. Position 108 is a phosphothreonine (Thr108). 2 substrate regions span residues 146-155 (KYIKKKKKKY) and 176-183 (REPGKINH). The segment at 275–354 (MLSSEPKDST…EKQRRQEEQR (80 aa)) is disordered. The segment covering 289–307 (SNGELEEKEIAEQADEDNI) has biased composition (acidic residues). Positions 328-354 (PENKEPKEKRSKRDYIQEKQRRQEEQR) are enriched in basic and acidic residues. The substrate site is built by Arg349 and Arg377. Substrate stretches follow at residues 415 to 423 (RERGGVINL) and 434 to 441 (QVLPDRSH). The interval 474 to 497 (TGALDPHKAEEPAAKKQKCMESAS) is disordered. The span at 478-487 (DPHKAEEPAA) shows a compositional bias: basic and acidic residues.

This sequence belongs to the TRM6/GCD10 family. As to quaternary structure, heterotetramer; composed of two copies of TRMT6 and two copies of TRMT61A.

It is found in the nucleus. Functionally, substrate-binding subunit of tRNA (adenine-N(1)-)-methyltransferase, which catalyzes the formation of N(1)-methyladenine at position 58 (m1A58) in initiator methionyl-tRNA. Together with the TRMT61A catalytic subunit, part of a mRNA N(1)-methyltransferase complex that mediates methylation of adenosine residues at the N(1) position of a small subset of mRNAs: N(1) methylation takes place in tRNA T-loop-like structures of mRNAs and is only present at low stoichiometries. This is tRNA (adenine(58)-N(1))-methyltransferase non-catalytic subunit TRM6 (Trmt6) from Mus musculus (Mouse).